Here is a 308-residue protein sequence, read N- to C-terminus: Glutathione synthetase (308 aa).

Positions 120-304 constitute an ATP-grasp domain; sequence KLGALRFNNL…LADQVIARLL (185 aa). An ATP-binding site is contributed by 146–202; the sequence is AREQEEVVLKPLGGRAGQGLVRVAGAAPGLEALLELVTDQEQLPVMVQRFLPAVIEG. Residues glutamate 275 and asparagine 277 each coordinate Mg(2+).

Belongs to the prokaryotic GSH synthase family. It depends on Mg(2+) as a cofactor. Mn(2+) is required as a cofactor.

The catalysed reaction is gamma-L-glutamyl-L-cysteine + glycine + ATP = glutathione + ADP + phosphate + H(+). The protein operates within sulfur metabolism; glutathione biosynthesis; glutathione from L-cysteine and L-glutamate: step 2/2. This is Glutathione synthetase from Prochlorococcus marinus (strain MIT 9313).